Here is a 396-residue protein sequence, read N- to C-terminus: 1-deoxy-D-xylulose 5-phosphate reductoisomerase (396 aa).

Residues Thr-17, Gly-18, Ser-19, Ile-20, Asn-47, and Asn-130 each contribute to the NADPH site. Lys-131 contacts 1-deoxy-D-xylulose 5-phosphate. Glu-132 contacts NADPH. A Mn(2+)-binding site is contributed by Asp-156. Residues Ser-157, Glu-158, Ser-182, and His-205 each contribute to the 1-deoxy-D-xylulose 5-phosphate site. Residue Glu-158 coordinates Mn(2+). Gly-211 contributes to the NADPH binding site. The 1-deoxy-D-xylulose 5-phosphate site is built by Ser-218, Asn-223, Lys-224, and Glu-227. Glu-227 is a binding site for Mn(2+).

This sequence belongs to the DXR family. Mg(2+) serves as cofactor. Requires Mn(2+) as cofactor.

It carries out the reaction 2-C-methyl-D-erythritol 4-phosphate + NADP(+) = 1-deoxy-D-xylulose 5-phosphate + NADPH + H(+). Its pathway is isoprenoid biosynthesis; isopentenyl diphosphate biosynthesis via DXP pathway; isopentenyl diphosphate from 1-deoxy-D-xylulose 5-phosphate: step 1/6. In terms of biological role, catalyzes the NADPH-dependent rearrangement and reduction of 1-deoxy-D-xylulose-5-phosphate (DXP) to 2-C-methyl-D-erythritol 4-phosphate (MEP). In Rhizobium johnstonii (strain DSM 114642 / LMG 32736 / 3841) (Rhizobium leguminosarum bv. viciae), this protein is 1-deoxy-D-xylulose 5-phosphate reductoisomerase.